Here is a 429-residue protein sequence, read N- to C-terminus: Probable imidazolonepropionase (429 aa).

Y161 and H194 together coordinate 4-imidazolone-5-propanoate. Y161 serves as a coordination point for N-formimidoyl-L-glutamate. Residue H262 participates in Fe(3+) binding. Position 262 (H262) interacts with Zn(2+). Position 265 (E265) interacts with 4-imidazolone-5-propanoate. Position 336 (D336) interacts with Fe(3+). D336 contributes to the Zn(2+) binding site. N338 lines the N-formimidoyl-L-glutamate pocket.

Belongs to the metallo-dependent hydrolases superfamily. HutI family. The cofactor is Zn(2+). Fe(3+) is required as a cofactor.

The catalysed reaction is 4-imidazolone-5-propanoate + H2O = N-formimidoyl-L-glutamate. It functions in the pathway amino-acid degradation; L-histidine degradation into L-glutamate; N-formimidoyl-L-glutamate from L-histidine: step 3/3. This chain is Probable imidazolonepropionase (amdhd1), found in Nematostella vectensis (Starlet sea anemone).